The primary structure comprises 294 residues: NAD kinase (294 aa).

Asp73 (proton acceptor) is an active-site residue. NAD(+)-binding positions include 73–74 (DG), 147–148 (NE), His158, Arg175, Asp177, and 188–193 (TAYALS).

It belongs to the NAD kinase family. Requires a divalent metal cation as cofactor.

It is found in the cytoplasm. The enzyme catalyses NAD(+) + ATP = ADP + NADP(+) + H(+). Functionally, involved in the regulation of the intracellular balance of NAD and NADP, and is a key enzyme in the biosynthesis of NADP. Catalyzes specifically the phosphorylation on 2'-hydroxyl of the adenosine moiety of NAD to yield NADP. In Tolumonas auensis (strain DSM 9187 / NBRC 110442 / TA 4), this protein is NAD kinase.